A 229-amino-acid chain; its full sequence is Enolase-phosphatase E1 (229 aa).

The disordered stretch occupies residues 207–229; it reads RDPASHHPQVQRFDDIHPEQIPA. Positions 218-229 are enriched in basic and acidic residues; sequence RFDDIHPEQIPA.

This sequence belongs to the HAD-like hydrolase superfamily. MasA/MtnC family. In terms of assembly, monomer. Mg(2+) is required as a cofactor.

It catalyses the reaction 5-methylsulfanyl-2,3-dioxopentyl phosphate + H2O = 1,2-dihydroxy-5-(methylsulfanyl)pent-1-en-3-one + phosphate. It functions in the pathway amino-acid biosynthesis; L-methionine biosynthesis via salvage pathway; L-methionine from S-methyl-5-thio-alpha-D-ribose 1-phosphate: step 3/6. It participates in amino-acid biosynthesis; L-methionine biosynthesis via salvage pathway; L-methionine from S-methyl-5-thio-alpha-D-ribose 1-phosphate: step 4/6. Functionally, bifunctional enzyme that catalyzes the enolization of 2,3-diketo-5-methylthiopentyl-1-phosphate (DK-MTP-1-P) into the intermediate 2-hydroxy-3-keto-5-methylthiopentenyl-1-phosphate (HK-MTPenyl-1-P), which is then dephosphorylated to form the acireductone 1,2-dihydroxy-3-keto-5-methylthiopentene (DHK-MTPene). This chain is Enolase-phosphatase E1, found in Klebsiella pneumoniae (strain 342).